Consider the following 143-residue polypeptide: D-aminoacyl-tRNA deacylase (143 aa).

The short motif at 135–136 is the Gly-cisPro motif, important for rejection of L-amino acids element; the sequence is GP.

The protein belongs to the DTD family. In terms of assembly, homodimer.

It is found in the cytoplasm. It catalyses the reaction glycyl-tRNA(Ala) + H2O = tRNA(Ala) + glycine + H(+). The enzyme catalyses a D-aminoacyl-tRNA + H2O = a tRNA + a D-alpha-amino acid + H(+). In terms of biological role, an aminoacyl-tRNA editing enzyme that deacylates mischarged D-aminoacyl-tRNAs. Also deacylates mischarged glycyl-tRNA(Ala), protecting cells against glycine mischarging by AlaRS. Acts via tRNA-based rather than protein-based catalysis; rejects L-amino acids rather than detecting D-amino acids in the active site. By recycling D-aminoacyl-tRNA to D-amino acids and free tRNA molecules, this enzyme counteracts the toxicity associated with the formation of D-aminoacyl-tRNA entities in vivo and helps enforce protein L-homochirality. The polypeptide is D-aminoacyl-tRNA deacylase (Mycobacterium bovis (strain BCG / Pasteur 1173P2)).